The primary structure comprises 92 residues: CRISPR-associated endoribonuclease Cas2 1 (92 aa).

Asp10 contacts Mg(2+).

The protein belongs to the CRISPR-associated endoribonuclease Cas2 protein family. In terms of assembly, homodimer, forms a heterotetramer with a Cas1 homodimer. Requires Mg(2+) as cofactor.

CRISPR (clustered regularly interspaced short palindromic repeat), is an adaptive immune system that provides protection against mobile genetic elements (viruses, transposable elements and conjugative plasmids). CRISPR clusters contain sequences complementary to antecedent mobile elements and target invading nucleic acids. CRISPR clusters are transcribed and processed into CRISPR RNA (crRNA). Functions as a ssRNA-specific endoribonuclease. Involved in the integration of spacer DNA into the CRISPR cassette. This is CRISPR-associated endoribonuclease Cas2 1 from Thermodesulfovibrio yellowstonii (strain ATCC 51303 / DSM 11347 / YP87).